The chain runs to 140 residues: Nucleoside diphosphate kinase (140 aa).

Residues lysine 11, phenylalanine 59, arginine 87, threonine 93, arginine 104, and asparagine 114 each contribute to the ATP site. Histidine 117 (pros-phosphohistidine intermediate) is an active-site residue.

The protein belongs to the NDK family. Homotetramer. The cofactor is Mg(2+).

The protein resides in the cytoplasm. It catalyses the reaction a 2'-deoxyribonucleoside 5'-diphosphate + ATP = a 2'-deoxyribonucleoside 5'-triphosphate + ADP. The enzyme catalyses a ribonucleoside 5'-diphosphate + ATP = a ribonucleoside 5'-triphosphate + ADP. Major role in the synthesis of nucleoside triphosphates other than ATP. The ATP gamma phosphate is transferred to the NDP beta phosphate via a ping-pong mechanism, using a phosphorylated active-site intermediate. In Francisella tularensis subsp. tularensis (strain SCHU S4 / Schu 4), this protein is Nucleoside diphosphate kinase.